The primary structure comprises 320 residues: tRNA dimethylallyltransferase (320 aa).

An ATP-binding site is contributed by 17–24 (GPTASGKT). 19 to 24 (TASGKT) is a substrate binding site. Interaction with substrate tRNA stretches follow at residues 42–45 (DSAL), 166–170 (QRIQR), and 249–254 (RCVGYR).

Belongs to the IPP transferase family. As to quaternary structure, monomer. Mg(2+) serves as cofactor.

The catalysed reaction is adenosine(37) in tRNA + dimethylallyl diphosphate = N(6)-dimethylallyladenosine(37) in tRNA + diphosphate. Functionally, catalyzes the transfer of a dimethylallyl group onto the adenine at position 37 in tRNAs that read codons beginning with uridine, leading to the formation of N6-(dimethylallyl)adenosine (i(6)A). In Herminiimonas arsenicoxydans, this protein is tRNA dimethylallyltransferase.